The following is a 509-amino-acid chain: Maturase K (509 aa).

It belongs to the intron maturase 2 family. MatK subfamily.

The protein localises to the plastid. It localises to the chloroplast. Functionally, usually encoded in the trnK tRNA gene intron. Probably assists in splicing its own and other chloroplast group II introns. The protein is Maturase K of Stylosanthes hamata (Caribbean stylo).